The sequence spans 373 residues: Protodeoxyviolaceinate monooxygenase (373 aa).

FAD is bound at residue 2–20; that stretch reads KILVIGAGPAGLVFASQLK.

Requires FAD as cofactor.

It catalyses the reaction protodeoxyviolaceinate + NADH + O2 + H(+) = protoviolaceinate + NAD(+) + H2O. The catalysed reaction is protodeoxyviolaceinate + NADPH + O2 + H(+) = protoviolaceinate + NADP(+) + H2O. It functions in the pathway pigment biosynthesis; violacein biosynthesis. Functionally, catalyzes the oxygenation of the 6-position of protodeoxyviolaceinate to form proviolacein. The polypeptide is Protodeoxyviolaceinate monooxygenase (vioD) (Chromobacterium violaceum (strain ATCC 12472 / DSM 30191 / JCM 1249 / CCUG 213 / NBRC 12614 / NCIMB 9131 / NCTC 9757 / MK)).